A 222-amino-acid chain; its full sequence is Translation initiation factor 6 (222 aa).

The protein belongs to the eIF-6 family.

Functionally, binds to the 50S ribosomal subunit and prevents its association with the 30S ribosomal subunit to form the 70S initiation complex. The chain is Translation initiation factor 6 from Methanocorpusculum labreanum (strain ATCC 43576 / DSM 4855 / Z).